We begin with the raw amino-acid sequence, 315 residues long: Olfactory receptor 5AN6 (315 aa).

Topologically, residues 1–29 (MPGGRNSTVITKFILVGFSDFPKLKLVLF) are extracellular. The helical transmembrane segment at 30 to 50 (VIFLGSYLSTVVWNLGLIILI) threads the bilayer. Over 51–54 (RIDP) the chain is Cytoplasmic. The helical transmembrane segment at 55-75 (YLHTPMYFFLSNLSFLDFCYI) threads the bilayer. Over 76 to 99 (SSTTPKMLSGFFQKSKSISFVGCT) the chain is Extracellular. Residues Cys-98 and Cys-180 are joined by a disulfide bond. Residues 100–120 (MQYFIFSSLGLSECCLLAAMA) form a helical membrane-spanning segment. Residues 121–123 (YDR) are Cytoplasmic-facing. The helical transmembrane segment at 124 to 143 (YAAICNPLLYTAIMSPSLCV) threads the bilayer. His-144 is a topological domain (extracellular). A helical membrane pass occupies residues 145–165 (MVVGAYSTGLLGSLIQLCAIL). Topologically, residues 166 to 202 (QLHFCGPNIINHFFCDLPQLLVLSCSETFPLQVLKFV) are cytoplasmic. A helical membrane pass occupies residues 203–223 (IAVIFGVASVIVILISYGYII). Topologically, residues 224–240 (GTILNISSVEGRSKAFN) are extracellular. A helical membrane pass occupies residues 241–261 (TCASHLTAVTLFFGSGLFVYM). At 262–272 (RPSSNSSQGYD) the chain is on the cytoplasmic side. A helical transmembrane segment spans residues 273–293 (KMASVFYTVVIPMLNPLIYSL). Over 294–315 (RNKEIKDALQRCKNKCFSQCHC) the chain is Extracellular.

Belongs to the G-protein coupled receptor 1 family. As to expression, localized in the dorsomedial and ventral region of the olfactory bulb.

The protein resides in the cell membrane. Odorant receptor specific for muscone. Muscone-binding causes a conformation change that triggers signaling via G(s)-class of G alpha protein GNAL, activating adenylyl cyclase. This is Olfactory receptor 5AN6 from Mus musculus (Mouse).